We begin with the raw amino-acid sequence, 420 residues long: Adenylosuccinate synthetase (420 aa).

GTP-binding positions include 12-18 (GDEGKGK) and 40-42 (GHT). Residue Asp-13 is the Proton acceptor of the active site. Residues Asp-13 and Gly-40 each coordinate Mg(2+). IMP is bound by residues 13–16 (DEGK), 38–41 (NAGH), Thr-128, Arg-142, Gln-221, Thr-236, and Arg-299. The active-site Proton donor is the His-41. Residue 295-301 (ATTGRPR) coordinates substrate. Residues Arg-301, 327–329 (KAD), and 399–401 (SYG) each bind GTP.

The protein belongs to the adenylosuccinate synthetase family. In terms of assembly, homodimer. Mg(2+) is required as a cofactor.

The protein resides in the cytoplasm. The enzyme catalyses IMP + L-aspartate + GTP = N(6)-(1,2-dicarboxyethyl)-AMP + GDP + phosphate + 2 H(+). Its pathway is purine metabolism; AMP biosynthesis via de novo pathway; AMP from IMP: step 1/2. Its function is as follows. Plays an important role in the de novo pathway of purine nucleotide biosynthesis. Catalyzes the first committed step in the biosynthesis of AMP from IMP. The polypeptide is Adenylosuccinate synthetase (Petrotoga mobilis (strain DSM 10674 / SJ95)).